A 100-amino-acid chain; its full sequence is Small ribosomal subunit protein uS14c (100 aa).

Belongs to the universal ribosomal protein uS14 family. As to quaternary structure, part of the 30S ribosomal subunit.

It is found in the plastid. Its subcellular location is the chloroplast. In terms of biological role, binds 16S rRNA, required for the assembly of 30S particles. This Amborella trichopoda protein is Small ribosomal subunit protein uS14c.